Here is a 356-residue protein sequence, read N- to C-terminus: Nicotinate-nucleotide--dimethylbenzimidazole phosphoribosyltransferase (356 aa).

Catalysis depends on E317, which acts as the Proton acceptor.

The protein belongs to the CobT family. In terms of assembly, homodimer.

The catalysed reaction is 5,6-dimethylbenzimidazole + nicotinate beta-D-ribonucleotide = alpha-ribazole 5'-phosphate + nicotinate + H(+). It participates in nucleoside biosynthesis; alpha-ribazole biosynthesis; alpha-ribazole from 5,6-dimethylbenzimidazole: step 1/2. Catalyzes the synthesis of alpha-ribazole-5'-phosphate from nicotinate mononucleotide (NAMN) and 5,6-dimethylbenzimidazole (DMB). This chain is Nicotinate-nucleotide--dimethylbenzimidazole phosphoribosyltransferase, found in Salmonella agona (strain SL483).